A 506-amino-acid polypeptide reads, in one-letter code: Cytochrome P450 monooxygenase BOA3 (506 aa).

A helical transmembrane segment spans residues 15-35; it reads IYLWIGFVLVVLLAYPTYFAI. Residue C451 participates in heme binding.

This sequence belongs to the cytochrome P450 family. Heme serves as cofactor.

Its subcellular location is the membrane. It participates in polyketide biosynthesis. In terms of biological role, cytochrome P450 monooxygenase; part of the gene cluster A that mediates the biosynthesis of botcinic acid and its botcinin derivatives, acetate-derived polyketides that contribute to virulence when combined with the sesquiterpene botrydial. Botcinic acid and its derivatives have been shown to induce chlorosis and necrosis during host plant infection, but also have antifungal activities. Two polyketide synthases, BOA6 and BOA9, are involved in the biosynthesis of botcinins. BOA6 mediates the formation of the per-methylated tetraketide core by condensation of four units of malonyl-CoA with one unit of acetyl-CoA, which would be methylated in activated methylene groups to yield a bicyclic acid intermediate that could then either be converted to botrylactone derivatives or lose the starter acetate unit through a retro-Claisen type C-C bond cleavage to yield botcinin derivatives. The second polyketide synthase, BOA9, is probably required for the biosynthesis of the tetraketide side chain of botcinins. The methyltransferase (MT) domain within BOA6 is probably responsible for the incorporation of four methyl groups. The trans-enoyl reductase BOA5 might take over the enoyl reductase function of BOA6 that misses an ER domain. The monooxygenases BOA2, BOA3 and BOA4 might be involved in further hydroxylations at C4, C5 and C8, whereas BOA7, close to BOA9, could potentially be involved in the hydroxylation at C4 in the side chain of botcinins. This is Cytochrome P450 monooxygenase BOA3 from Botryotinia fuckeliana (strain B05.10) (Noble rot fungus).